Here is a 244-residue protein sequence, read N- to C-terminus: Glutathione-independent glyoxalase hsp3101 (244 aa).

Active-site residues include Cys139, His140, and Glu173.

The protein belongs to the peptidase C56 family. HSP31-like subfamily.

The protein resides in the cytoplasm. The protein localises to the nucleus. The catalysed reaction is methylglyoxal + H2O = (R)-lactate + H(+). Catalyzes the conversion of methylglyoxal (MG) to D-lactate in a single glutathione (GSH)-independent step. May play a role in detoxifying endogenously produced glyoxals. Involved in protection against reactive oxygen species (ROS). In Schizosaccharomyces pombe (strain 972 / ATCC 24843) (Fission yeast), this protein is Glutathione-independent glyoxalase hsp3101.